A 213-amino-acid polypeptide reads, in one-letter code: Charged multivesicular body protein 2b (213 aa).

N-acetylalanine is present on A2. Residues 25–55 (QRAIIRDRAALEKQEKQLELEIKKMAKIGNK) are a coiled coil. The segment covering 179–194 (AKAPSAARSLPSASTS) has biased composition (low complexity). The disordered stretch occupies residues 179–199 (AKAPSAARSLPSASTSKATIS). Phosphoserine is present on S199. An MIT-interacting motif motif is present at residues 201–211 (EEIERQLKALG).

This sequence belongs to the SNF7 family. Probable core component of the endosomal sorting required for transport complex III (ESCRT-III). ESCRT-III components are thought to multimerize to form a flat lattice on the perimeter membrane of the endosome. Several assembly forms of ESCRT-III may exist that interact and act sequentially. Interacts with CHMP2A. Interacts with VPS4A. Interacts with VPS4B; the interaction is direct. In terms of tissue distribution, in brain, it is expressed in all neuronal populations with a relatively enhanced expression in the hippocampus, frontal and temporal lobes and in both granule and Purkinje cells of the cerebellum. Not expressed in astrocytes or oligodendrocytes.

Its subcellular location is the cytoplasm. It localises to the cytosol. It is found in the late endosome membrane. In terms of biological role, probable core component of the endosomal sorting required for transport complex III (ESCRT-III) which is involved in multivesicular bodies (MVBs) formation and sorting of endosomal cargo proteins into MVBs. MVBs contain intraluminal vesicles (ILVs) that are generated by invagination and scission from the limiting membrane of the endosome and mostly are delivered to lysosomes enabling degradation of membrane proteins, such as stimulated growth factor receptors, lysosomal enzymes and lipids. The MVB pathway appears to require the sequential function of ESCRT-O, -I,-II and -III complexes. ESCRT-III proteins mostly dissociate from the invaginating membrane before the ILV is released. The ESCRT machinery also functions in topologically equivalent membrane fission events, such as the terminal stages of cytokinesis. ESCRT-III proteins are believed to mediate the necessary vesicle extrusion and/or membrane fission activities, possibly in conjunction with the AAA ATPase VPS4. The chain is Charged multivesicular body protein 2b (Chmp2b) from Mus musculus (Mouse).